The following is a 246-amino-acid chain: ATP synthase subunit a (246 aa).

The next 5 membrane-spanning stretches (helical) occupy residues 34 to 54 (GQTM…TFIG), 92 to 112 (WVPL…LGQL), 130 to 150 (DINT…YAGL), 155 to 175 (FGYF…VLEF), and 196 to 216 (VVAV…MILF).

This sequence belongs to the ATPase A chain family. As to quaternary structure, F-type ATPases have 2 components, CF(1) - the catalytic core - and CF(0) - the membrane proton channel. CF(1) has five subunits: alpha(3), beta(3), gamma(1), delta(1), epsilon(1). CF(0) has four main subunits: a, b, b' and c.

It is found in the cell inner membrane. Key component of the proton channel; it plays a direct role in the translocation of protons across the membrane. The polypeptide is ATP synthase subunit a (Gloeobacter violaceus (strain ATCC 29082 / PCC 7421)).